The chain runs to 898 residues: Protein kintoun (898 aa).

Disordered stretches follow at residues 558–680 and 765–822; these read GELK…VESD and ILGQ…SGIS. A compositionally biased stretch (basic and acidic residues) spans 575-602; that stretch reads INTRTVEDDTKVAKENVKKVDQETAHEG. Over residues 603 to 616 the composition is skewed to basic residues; that stretch reads KKSKKNQRRKNKKR. The segment covering 641 to 656 has biased composition (polar residues); sequence NEANSFEGTGSSSEAT.

This sequence belongs to the PIH1 family. Kintoun subfamily.

The protein localises to the cytoplasm. Functionally, required for cytoplasmic pre-assembly of axonemal dyneins, thereby playing a central role in motility in cilia and flagella. Involved in pre-assembly of dynein arm complexes in the cytoplasm before intraflagellar transport loads them for the ciliary compartment. This Aedes aegypti (Yellowfever mosquito) protein is Protein kintoun.